A 212-amino-acid chain; its full sequence is External core antigen (212 aa).

A signal peptide spans 1 to 19 (MQLFHLCLVISCSCPTVQA). Residues 25–27 (GWL) form an HBEAG region. The tract at residues 165-212 (NAPILSTLPETTVVRRRGRSPRRRTPSPRRRRSQSPRRRRSQSRESQC) is disordered. Positions 178 to 205 (VRRRGRSPRRRTPSPRRRRSQSPRRRRS) are enriched in basic residues. A 1; half-length repeat occupies 184-190 (SPRRRTP). The interval 184–206 (SPRRRTPSPRRRRSQSPRRRRSQ) is 3 X 8 AA repeats of S-P-R-R-R-R-S-Q. Positions 184 to 212 (SPRRRTPSPRRRRSQSPRRRRSQSRESQC) are excised as a propeptide. 2 repeat units span residues 191-198 (SPRRRRSQ) and 199-206 (SPRRRRSQ).

Belongs to the orthohepadnavirus precore antigen family. As to quaternary structure, homodimerizes. In terms of processing, phosphorylated. Post-translationally, cleaved by host furin.

It is found in the secreted. It localises to the host nucleus. May regulate immune response to the intracellular capsid in acting as a T-cell tolerogen, by having an immunoregulatory effect which prevents destruction of infected cells by cytotoxic T-cells. This immune regulation may predispose to chronicity during perinatal infections and prevent severe liver injury during adult infections. This is External core antigen from Hepatitis B virus genotype B1 subtype adw (isolate Japan/pJDW233/1988) (HBV-B).